Reading from the N-terminus, the 173-residue chain is Crossover junction endodeoxyribonuclease RuvC (173 aa).

Active-site residues include Asp8, Glu67, and Asp139. Residues Asp8, Glu67, and Asp139 each coordinate Mg(2+).

It belongs to the RuvC family. As to quaternary structure, homodimer which binds Holliday junction (HJ) DNA. The HJ becomes 2-fold symmetrical on binding to RuvC with unstacked arms; it has a different conformation from HJ DNA in complex with RuvA. In the full resolvosome a probable DNA-RuvA(4)-RuvB(12)-RuvC(2) complex forms which resolves the HJ. It depends on Mg(2+) as a cofactor.

It localises to the cytoplasm. It catalyses the reaction Endonucleolytic cleavage at a junction such as a reciprocal single-stranded crossover between two homologous DNA duplexes (Holliday junction).. The RuvA-RuvB-RuvC complex processes Holliday junction (HJ) DNA during genetic recombination and DNA repair. Endonuclease that resolves HJ intermediates. Cleaves cruciform DNA by making single-stranded nicks across the HJ at symmetrical positions within the homologous arms, yielding a 5'-phosphate and a 3'-hydroxyl group; requires a central core of homology in the junction. The consensus cleavage sequence is 5'-(A/T)TT(C/G)-3'. Cleavage occurs on the 3'-side of the TT dinucleotide at the point of strand exchange. HJ branch migration catalyzed by RuvA-RuvB allows RuvC to scan DNA until it finds its consensus sequence, where it cleaves and resolves the cruciform DNA. This chain is Crossover junction endodeoxyribonuclease RuvC, found in Aeromonas hydrophila subsp. hydrophila (strain ATCC 7966 / DSM 30187 / BCRC 13018 / CCUG 14551 / JCM 1027 / KCTC 2358 / NCIMB 9240 / NCTC 8049).